A 159-amino-acid chain; its full sequence is Neuroglobin (159 aa).

The Globin domain occupies 3–151 (KLSSKDKELI…VVASMSRGWA (149 aa)). 2 residues coordinate heme b: His66 and His98.

This sequence belongs to the globin family. Monomer. Homodimers and homotetramers. Mainly monomeric but also detected as part of homodimers and homotetramers.

The protein localises to the cytoplasm. Its subcellular location is the cytosol. The protein resides in the mitochondrion matrix. The enzyme catalyses Fe(III)-heme b-[protein] + nitric oxide + H2O = Fe(II)-heme b-[protein] + nitrite + 2 H(+). Its function is as follows. Monomeric globin with a bis-histidyl six-coordinate heme-iron atom through which it can bind dioxygen, carbon monoxide and nitric oxide. Could help transport oxygen and increase its availability to the metabolically active neuronal tissues, though its low quantity in tissues as well as its high affinity for dioxygen, which may limit its oxygen-releasing ability, argue against it. The ferrous/deoxygenated form exhibits a nitrite reductase activity and it could produce nitric oxide which in turn inhibits cellular respiration in response to hypoxia. In its ferrous/deoxygenated state, it may also exhibit GDI (Guanine nucleotide Dissociation Inhibitor) activity toward heterotrimeric G-alpha proteins, thereby regulating signal transduction to facilitate neuroprotective responses in the wake of hypoxia and associated oxidative stress. The sequence is that of Neuroglobin (ngb) from Tetraodon nigroviridis (Spotted green pufferfish).